The sequence spans 251 residues: Ubiquinone/menaquinone biosynthesis C-methyltransferase UbiE (251 aa).

S-adenosyl-L-methionine is bound by residues Thr-74, Asp-95, 123–124 (NA), and Ser-140.

Belongs to the class I-like SAM-binding methyltransferase superfamily. MenG/UbiE family.

It catalyses the reaction a 2-demethylmenaquinol + S-adenosyl-L-methionine = a menaquinol + S-adenosyl-L-homocysteine + H(+). It carries out the reaction a 2-methoxy-6-(all-trans-polyprenyl)benzene-1,4-diol + S-adenosyl-L-methionine = a 5-methoxy-2-methyl-3-(all-trans-polyprenyl)benzene-1,4-diol + S-adenosyl-L-homocysteine + H(+). It functions in the pathway quinol/quinone metabolism; menaquinone biosynthesis; menaquinol from 1,4-dihydroxy-2-naphthoate: step 2/2. It participates in cofactor biosynthesis; ubiquinone biosynthesis. Its function is as follows. Methyltransferase required for the conversion of demethylmenaquinol (DMKH2) to menaquinol (MKH2) and the conversion of 2-polyprenyl-6-methoxy-1,4-benzoquinol (DDMQH2) to 2-polyprenyl-3-methyl-6-methoxy-1,4-benzoquinol (DMQH2). The polypeptide is Ubiquinone/menaquinone biosynthesis C-methyltransferase UbiE (Escherichia fergusonii (strain ATCC 35469 / DSM 13698 / CCUG 18766 / IAM 14443 / JCM 21226 / LMG 7866 / NBRC 102419 / NCTC 12128 / CDC 0568-73)).